The sequence spans 594 residues: Probable glucose transporter rco-3 (594 aa).

The Cytoplasmic segment spans residues methionine 1–asparagine 13. The helical transmembrane segment at valine 14–leucine 34 threads the bilayer. The Extracellular segment spans residues leucine 35–serine 73. The chain crosses the membrane as a helical span at residues alanine 74–leucine 94. The Cytoplasmic segment spans residues glycine 95–serine 103. The helical transmembrane segment at leucine 104–isoleucine 124 threads the bilayer. Position 125 (aspartate 125) is a topological domain, extracellular. A helical transmembrane segment spans residues leucine 126–proline 146. Residues leucine 147–glycine 159 are Cytoplasmic-facing. The helical transmembrane segment at threonine 160–asparagine 180 threads the bilayer. Over isoleucine 181–arginine 193 the chain is Extracellular. Residues valine 194–proline 214 traverse the membrane as a helical segment. Over glutamate 215 to glutamine 293 the chain is Cytoplasmic. A helical transmembrane segment spans residues leucine 294–glycine 314. Over asparagine 315 to lysine 318 the chain is Extracellular. The helical transmembrane segment at isoleucine 319–glutamate 339 threads the bilayer. The Cytoplasmic segment spans residues serine 340–arginine 345. A helical transmembrane segment spans residues leucine 346–threonine 366. The Extracellular segment spans residues alanine 367–lysine 378. N-linked (GlcNAc...) asparagine glycosylation is present at asparagine 372. Residues valine 379–threonine 403 form a helical membrane-spanning segment. The Cytoplasmic portion of the chain corresponds to serine 404 to serine 415. A helical transmembrane segment spans residues methionine 416–tyrosine 436. Residues methionine 437–lysine 454 are Extracellular-facing. The chain crosses the membrane as a helical span at residues valine 455–tyrosine 475. Topologically, residues glutamate 476–tyrosine 594 are cytoplasmic. The segment at aspartate 512–tyrosine 594 is disordered. The segment covering glutamine 524–glycine 576 has biased composition (low complexity).

Belongs to the major facilitator superfamily. Sugar transporter (TC 2.A.1.1) family.

Its subcellular location is the membrane. In terms of biological role, probable glucose transporter. Involved in sugar transport, carbon catabolite repression, and initiation of conidiophore development. This chain is Probable glucose transporter rco-3 (rco-3), found in Neurospora crassa (strain ATCC 24698 / 74-OR23-1A / CBS 708.71 / DSM 1257 / FGSC 987).